Reading from the N-terminus, the 171-residue chain is MTRTTGAAPDRAAPAAGETPGGGGRAQVYLHAGQIAVAAEPTAIVTVLGSCVAVCLHDPVARVGGMNHFLLPLHVEREQSARFGTVAVPQLVEAVVRAGARRASLVAKVFGGASVIGAFRGARNLGDENVQLALRLLDEARIPVLDRDVGGARGRKLIFHVDDGAAWVRQL.

Over residues 1 to 18 the composition is skewed to low complexity; the sequence is MTRTTGAAPDRAAPAAGE. A disordered region spans residues 1–23; that stretch reads MTRTTGAAPDRAAPAAGETPGGG.

Belongs to the CheD family.

It catalyses the reaction L-glutaminyl-[protein] + H2O = L-glutamyl-[protein] + NH4(+). Functionally, probably deamidates glutamine residues to glutamate on methyl-accepting chemotaxis receptors (MCPs), playing an important role in chemotaxis. The sequence is that of Probable chemoreceptor glutamine deamidase CheD 1 from Anaeromyxobacter dehalogenans (strain 2CP-C).